The primary structure comprises 306 residues: Agmatinase (306 aa).

Mn(2+) contacts are provided by histidine 126, aspartate 149, histidine 151, aspartate 153, aspartate 230, and aspartate 232.

This sequence belongs to the arginase family. Agmatinase subfamily. Mn(2+) is required as a cofactor.

It catalyses the reaction agmatine + H2O = urea + putrescine. Its pathway is amine and polyamine biosynthesis; putrescine biosynthesis via agmatine pathway; putrescine from agmatine: step 1/1. Its function is as follows. Catalyzes the formation of putrescine from agmatine. The sequence is that of Agmatinase from Cronobacter sakazakii (strain ATCC BAA-894) (Enterobacter sakazakii).